Here is a 339-residue protein sequence, read N- to C-terminus: Anthranilate phosphoribosyltransferase (339 aa).

Residues Gly79, 82-83 (GD), Thr87, 89-92 (NIST), 107-115 (KHGNRAVSS), and Ser119 each bind 5-phospho-alpha-D-ribose 1-diphosphate. Gly79 is an anthranilate binding site. Residue Ser91 coordinates Mg(2+). Asn110 is a binding site for anthranilate. Residue Arg165 coordinates anthranilate. Positions 224 and 225 each coordinate Mg(2+).

This sequence belongs to the anthranilate phosphoribosyltransferase family. Homodimer. It depends on Mg(2+) as a cofactor.

It carries out the reaction N-(5-phospho-beta-D-ribosyl)anthranilate + diphosphate = 5-phospho-alpha-D-ribose 1-diphosphate + anthranilate. The protein operates within amino-acid biosynthesis; L-tryptophan biosynthesis; L-tryptophan from chorismate: step 2/5. In terms of biological role, catalyzes the transfer of the phosphoribosyl group of 5-phosphorylribose-1-pyrophosphate (PRPP) to anthranilate to yield N-(5'-phosphoribosyl)-anthranilate (PRA). The sequence is that of Anthranilate phosphoribosyltransferase from Geobacillus sp. (strain WCH70).